Consider the following 486-residue polypeptide: Shugoshin-1 (486 aa).

Residues 71–154 are a coiled coil; it reads IEVSRVELQK…QNRAKILEKK (84 aa). Disordered regions lie at residues 137-163, 187-209, 222-251, 323-346, 382-403, and 418-467; these read MSKTSNNQQNRAKILEKKTRSSKCAPT, YTSCHEPPQDKTNKRCTNRRKSE, HSCRPHVEYNGSSHDDDPRKTRRRRSARLN, AGSSVAGGEAHKFDIEDPEPPRKS, PIQHEQKRKLSRRKSSRLDPGP, and TVAP…SRRA. A compositionally biased stretch (basic and acidic residues) spans 331–346; sequence EAHKFDIEDPEPPRKS. Residues 387–396 are compositionally biased toward basic residues; it reads QKRKLSRRKS. Residues 423–433 show a composition bias toward polar residues; sequence APSSSNALIEQ.

This sequence belongs to the shugoshin family. In terms of tissue distribution, highly expressed in roots. Expressed in panicles. Expressed at low levels in leaves.

It localises to the nucleus. It is found in the nucleolus. The protein resides in the chromosome. Its subcellular location is the centromere. Its function is as follows. Plays a central role in chromosome cohesion during meiosis I by preventing premature dissociation of cohesin complex from centromeres after prophase, when most of cohesin complex dissociates from chromosomes arms. Required for the timely assembly and maintenance of synaptonemal complex (SC) during early prophase I. Required for maintenance of centromeric cohesion before prophase II and correct segregation of chromatids during meiosis II. Has apparently no function in mitosis. This is Shugoshin-1 from Oryza sativa subsp. japonica (Rice).